The following is a 1061-amino-acid chain: Lysine-specific demethylase jmjd-3.1 (1061 aa).

Disordered stretches follow at residues 30 to 49 (VKNS…MRPV) and 256 to 417 (KSLS…KRRT). Over residues 271-287 (QHTNSVGSSIGTTSGDS) the composition is skewed to polar residues. Low complexity predominate over residues 310 to 320 (STSSEFTETTS). Residues 321–330 (VANQTESNAG) are compositionally biased toward polar residues. The interval 369–417 (KKKEQSATEPPIPRTKRAYTKNPNTIRKRRMKKNQSDDEEDDGPPKRRT) is required for nuclear localization. The interval 418–759 (INYQIEFRDA…FGTNIDLLSE (342 aa)) is required for binding of unc-3 and for function in Y-to-PDA transdifferentiation. Positions 760 to 923 (NFKKQMNEIE…LATSIVAHDH (164 aa)) constitute a JmjC domain. Residues His-811, Glu-813, and His-891 each coordinate Fe cation. Positions 998, 1001, 1025, and 1028 each coordinate Zn(2+).

This sequence belongs to the UTX family. As to quaternary structure, interacts with wdr-5.1 and unc-3. Fe(2+) serves as cofactor. Mainly expressed in head and tail.

The protein resides in the nucleus. Its function is as follows. Histone demethylase that specifically demethylates trimethylated 'Lys-27' of histone H3, a mark associated with transcriptional repression, thereby playing a central role in the histone code. Involved in the transcriptional regulation of the heat shock response, unfolded protein response and possibly other stress response target genes. Required for gonad development and organization. Required for the robust transdifferentiation of the Y rectal epithelial cell to the PDA motor neuron during larval development. Acts cell-autonomously in Y-to-PDA transdifferentiation, which depends on the demethylase activity and on recognition of the H3 tail. Cooperates with set-2 and unc-3 to ensure robust Y-to-PDA transdifferentiation. Promotes mitochondrial stress-induced longevity. Involved in lifespan regulation. This Caenorhabditis elegans protein is Lysine-specific demethylase jmjd-3.1.